Here is a 262-residue protein sequence, read N- to C-terminus: Phosphatidylglycerol--prolipoprotein diacylglyceryl transferase (262 aa).

The next 4 helical transmembrane spans lie at 17–37 (LAIHWYGLMYLIGFALVYALG), 57–77 (LIFYSVLGVVLGGRLGYVLFY), 95–115 (GGMSFHGGLIGVIVVMLLFAH), and 119–139 (LGFFTVSDFIAPLIPLGLAAG). Residue Arg140 coordinates a 1,2-diacyl-sn-glycero-3-phospho-(1'-sn-glycerol). The next 3 membrane-spanning stretches (helical) occupy residues 173-193 (PSQLYELGLEGIVLFALLWWY), 200-220 (AGQVSAMFLMGYGAFRFLVEF), and 227-247 (FLGLLAAGLSMGQWLSIPMVL).

Belongs to the Lgt family.

It is found in the cell inner membrane. It catalyses the reaction L-cysteinyl-[prolipoprotein] + a 1,2-diacyl-sn-glycero-3-phospho-(1'-sn-glycerol) = an S-1,2-diacyl-sn-glyceryl-L-cysteinyl-[prolipoprotein] + sn-glycerol 1-phosphate + H(+). It functions in the pathway protein modification; lipoprotein biosynthesis (diacylglyceryl transfer). Catalyzes the transfer of the diacylglyceryl group from phosphatidylglycerol to the sulfhydryl group of the N-terminal cysteine of a prolipoprotein, the first step in the formation of mature lipoproteins. The sequence is that of Phosphatidylglycerol--prolipoprotein diacylglyceryl transferase from Bordetella parapertussis (strain 12822 / ATCC BAA-587 / NCTC 13253).